The following is a 246-amino-acid chain: IPSRPVGGPCYLGKLTMLAPNHTDILKILANSSRTGIRRKRSVSHLDDTCSDEVQLWGPTARIFASILAPGVAAAQALKEIERLACWSVKQANLTTSLLGDLLDDVTSIRHAVLQNRAAIDFLLLAHGHGCEDVAGMCCFNLSDHSESIQKKFQLMKEHVNKIGVDSDPIGSWLRGLFGGIGEWAVHLLKGLLLGLVVILLLVVCLPCLLQIVCGNIRKMINNSISYHTEYKKLQKAYGQPESRIV.

At 1–192 (IPSRPVGGPC…EWAVHLLKGL (192 aa)) the chain is on the extracellular side. Residue asparagine 31 is glycosylated (N-linked (GlcNAc...) asparagine; by host). Cysteines 50 and 86 form a disulfide. Residues 58–78 (GPTARIFASILAPGVAAAQAL) form a fusion peptide region. Residues 75–125 (AQALKEIERLACWSVKQANLTTSLLGDLLDDVTSIRHAVLQNRAAIDFLLL) are a coiled coil. N-linked (GlcNAc...) asparagine; by host glycosylation occurs at asparagine 93. The segment at 114–130 (LQNRAAIDFLLLAHGHG) is immunosuppression. Cysteines 131 and 138 form a disulfide. Asparagine 141 is a glycosylation site (N-linked (GlcNAc...) asparagine; by host). Residues 143–173 (SDHSESIQKKFQLMKEHVNKIGVDSDPIGSW) adopt a coiled-coil conformation. Residues 193–213 (LLGLVVILLLVVCLPCLLQIV) traverse the membrane as a helical segment. 2 S-palmitoyl cysteine; by host lipidation sites follow: cysteine 205 and cysteine 208. Over 214–246 (CGNIRKMINNSISYHTEYKKLQKAYGQPESRIV) the chain is Cytoplasmic.

It belongs to the Alpharetroviruses envelope glycoprotein family. In terms of assembly, heterodimer with the transmembrane protein. The mature envelope protein (Env) consists of a trimer of SU-TM heterodimers attached by a labile interchain disulfide bond. As to quaternary structure, heterodimer with the surface protein. The mature envelope protein (Env) consists of a trimer of SU-TM heterodimers attached by a labile interchain disulfide bond. Post-translationally, specific enzymatic cleavages in vivo yield mature proteins. Envelope glycoproteins are synthesized as an inactive precursor that is N-glycosylated and processed likely by host cell furin or by a furin-like protease in the Golgi to yield the mature SU and TM proteins. The cleavage site between SU and TM requires the minimal sequence [KR]-X-[KR]-R. The transmembrane protein is palmitoylated. Palmitoylation is necessary for glycoprotein function and infectivity.

The protein localises to the virion membrane. Its subcellular location is the host cell membrane. Functionally, the surface protein (SU) attaches the virus to the host cell by binding to its receptor. This interaction triggers the refolding of the transmembrane protein (TM) thereby unmasking its fusion peptide and the formation of a reactive thiolate to activate its fusogenic potential. Fusion occurs at the host cell plasma membrane. Its function is as follows. The transmembrane protein (TM) acts as a class I viral fusion protein. Under the current model, the protein has at least 3 conformational states: pre-fusion native state, pre-hairpin intermediate state, and post-fusion hairpin state. During viral and target cell membrane fusion, the coiled coil regions (heptad repeats) assume a trimer-of-hairpins structure, positioning the fusion peptide in close proximity to the C-terminal region of the ectodomain. The formation of this structure appears to drive apposition and subsequent fusion of viral and target cell membranes. Membranes fusion leads to delivery of the nucleocapsid into the cytoplasm. The chain is Envelope glycoprotein gp95 (env) from Galliformes.